A 552-amino-acid polypeptide reads, in one-letter code: DNA ligase (552 aa).

Residue E229 participates in ATP binding. The active-site N6-AMP-lysine intermediate is the K231. ATP is bound by residues R236 and E283. Residues E283 and E377 each coordinate Mg(2+). Positions 382 and 397 each coordinate ATP.

It belongs to the ATP-dependent DNA ligase family. Interacts with host TOP2A and TOP2B. Mg(2+) is required as a cofactor.

It is found in the host cytoplasm. It carries out the reaction ATP + (deoxyribonucleotide)n-3'-hydroxyl + 5'-phospho-(deoxyribonucleotide)m = (deoxyribonucleotide)n+m + AMP + diphosphate.. In terms of biological role, DNA ligase that seals nicks in double-stranded DNA during DNA replication, DNA recombination and DNA repair. Recruits cellular topoisomerase II to sites of viral replication and assembly. This chain is DNA ligase (OPG180), found in Homo sapiens (Human).